The primary structure comprises 161 residues: Phosphopantetheine adenylyltransferase (161 aa).

Thr10 lines the substrate pocket. ATP-binding positions include 10-11 and His18; that span reads TF. Lys42, Leu74, and Arg88 together coordinate substrate. ATP-binding positions include 89–91, Glu99, and 124–130; these read GLR and NSFISST.

This sequence belongs to the bacterial CoaD family. As to quaternary structure, homohexamer. Requires Mg(2+) as cofactor.

It is found in the cytoplasm. It carries out the reaction (R)-4'-phosphopantetheine + ATP + H(+) = 3'-dephospho-CoA + diphosphate. Its pathway is cofactor biosynthesis; coenzyme A biosynthesis; CoA from (R)-pantothenate: step 4/5. Functionally, reversibly transfers an adenylyl group from ATP to 4'-phosphopantetheine, yielding dephospho-CoA (dPCoA) and pyrophosphate. This Photobacterium profundum (strain SS9) protein is Phosphopantetheine adenylyltransferase.